A 40-amino-acid polypeptide reads, in one-letter code: 67 kDa serum albumin (40 aa).

Residues Asp-1–Ala-40 enclose the Albumin domain. Residue His-4 participates in Cu cation binding.

This sequence belongs to the ALB/AFP/VDB family. As to expression, plasma.

The protein localises to the secreted. Its function is as follows. Serum albumin, the main protein of plasma, has a good binding capacity for water, Ca(2+), Na(+), K(+), fatty acids, hormones, bilirubin and drugs. Its main function is the regulation of the colloidal osmotic pressure of blood. In Trachemys scripta (Red-eared slider turtle), this protein is 67 kDa serum albumin.